The sequence spans 141 residues: Large ribosomal subunit protein uL16 (141 aa).

Positions 1-17 are enriched in basic residues; sequence MLMPKRTKFRKQMKGRN. The segment at 1–22 is disordered; the sequence is MLMPKRTKFRKQMKGRNRGYAT.

Belongs to the universal ribosomal protein uL16 family. As to quaternary structure, part of the 50S ribosomal subunit.

Functionally, binds 23S rRNA and is also seen to make contacts with the A and possibly P site tRNAs. This is Large ribosomal subunit protein uL16 from Campylobacter curvus (strain 525.92).